Here is a 903-residue protein sequence, read N- to C-terminus: DNA transposase THAP9 (903 aa).

The THAP-type zinc-finger motif lies at 1–89 (MTRSCSAVGC…LKKGAVPSVS (89 aa)). The HCFC1-binding motif (HBM) signature appears at 123-126 (DHNY).

Active transposase that specifically recognizes the bipartite 5'-TXXGGGX(A/T)-3' consensus motif and mediates transposition. In Homo sapiens (Human), this protein is DNA transposase THAP9 (THAP9).